A 145-amino-acid chain; its full sequence is Protein MMF1, mitochondrial (145 aa).

The N-terminal 17 residues, 1–17 (MFLRNSVLRTAPVLRRG), are a transit peptide targeting the mitochondrion.

Belongs to the RutC family.

It localises to the mitochondrion matrix. Functionally, plays a role in the maintenance of mitochondrial DNA. The protein is Protein MMF1, mitochondrial (MMF1) of Saccharomyces cerevisiae (strain ATCC 204508 / S288c) (Baker's yeast).